Consider the following 425-residue polypeptide: Serine hydroxymethyltransferase 2 (425 aa).

(6S)-5,6,7,8-tetrahydrofolate-binding positions include Leu121 and Gly125–Leu127. Lys230 is subject to N6-(pyridoxal phosphate)lysine.

Belongs to the SHMT family. Homodimer. It depends on pyridoxal 5'-phosphate as a cofactor.

It localises to the cytoplasm. It carries out the reaction (6R)-5,10-methylene-5,6,7,8-tetrahydrofolate + glycine + H2O = (6S)-5,6,7,8-tetrahydrofolate + L-serine. The protein operates within one-carbon metabolism; tetrahydrofolate interconversion. It participates in amino-acid biosynthesis; glycine biosynthesis; glycine from L-serine: step 1/1. Functionally, catalyzes the reversible interconversion of serine and glycine with tetrahydrofolate (THF) serving as the one-carbon carrier. This reaction serves as the major source of one-carbon groups required for the biosynthesis of purines, thymidylate, methionine, and other important biomolecules. Also exhibits THF-independent aldolase activity toward beta-hydroxyamino acids, producing glycine and aldehydes, via a retro-aldol mechanism. This is Serine hydroxymethyltransferase 2 from Mycobacterium tuberculosis (strain CDC 1551 / Oshkosh).